Consider the following 70-residue polypeptide: Sec-independent protein translocase protein TatA (70 aa).

The helical transmembrane segment at 1–21 (MGIGVWELLLLFLIVLVVFGT) threads the bilayer. Residues 42–70 (MSENEDKPSEGGARTLEGEVVDKKEKDKV) are disordered. A compositionally biased stretch (basic and acidic residues) spans 57-70 (LEGEVVDKKEKDKV).

The protein belongs to the TatA/E family. The Tat system comprises two distinct complexes: a TatABC complex, containing multiple copies of TatA, TatB and TatC subunits, and a separate TatA complex, containing only TatA subunits. Substrates initially bind to the TatABC complex, which probably triggers association of the separate TatA complex to form the active translocon.

Its subcellular location is the cell inner membrane. Functionally, part of the twin-arginine translocation (Tat) system that transports large folded proteins containing a characteristic twin-arginine motif in their signal peptide across membranes. TatA could form the protein-conducting channel of the Tat system. The polypeptide is Sec-independent protein translocase protein TatA (Methylococcus capsulatus (strain ATCC 33009 / NCIMB 11132 / Bath)).